A 454-amino-acid polypeptide reads, in one-letter code: Bifunctional protein GlmU (454 aa).

The interval 1–225 (MNIVILAAGM…LWETLGVNSK (225 aa)) is pyrophosphorylase. UDP-N-acetyl-alpha-D-glucosamine contacts are provided by residues 6 to 9 (LAAG), Lys-20, Gln-71, 76 to 77 (GT), 98 to 100 (YGD), Gly-135, Glu-150, Asn-165, and Asn-223. Asp-100 contributes to the Mg(2+) binding site. Residue Asn-223 coordinates Mg(2+). The tract at residues 226–246 (VQLAEVERIHQRNLAQRLLET) is linker. The N-acetyltransferase stretch occupies residues 247–454 (GVTLADPARI…WQRPVKKAKQ (208 aa)). Positions 329 and 347 each coordinate UDP-N-acetyl-alpha-D-glucosamine. His-359 functions as the Proton acceptor in the catalytic mechanism. The UDP-N-acetyl-alpha-D-glucosamine site is built by Tyr-362 and Asn-373. Acetyl-CoA contacts are provided by residues Ala-376, 382 to 383 (NY), Ser-401, Ala-419, and Arg-436.

The protein in the N-terminal section; belongs to the N-acetylglucosamine-1-phosphate uridyltransferase family. It in the C-terminal section; belongs to the transferase hexapeptide repeat family. In terms of assembly, homotrimer. The cofactor is Mg(2+).

Its subcellular location is the cytoplasm. The catalysed reaction is alpha-D-glucosamine 1-phosphate + acetyl-CoA = N-acetyl-alpha-D-glucosamine 1-phosphate + CoA + H(+). It catalyses the reaction N-acetyl-alpha-D-glucosamine 1-phosphate + UTP + H(+) = UDP-N-acetyl-alpha-D-glucosamine + diphosphate. It functions in the pathway nucleotide-sugar biosynthesis; UDP-N-acetyl-alpha-D-glucosamine biosynthesis; N-acetyl-alpha-D-glucosamine 1-phosphate from alpha-D-glucosamine 6-phosphate (route II): step 2/2. It participates in nucleotide-sugar biosynthesis; UDP-N-acetyl-alpha-D-glucosamine biosynthesis; UDP-N-acetyl-alpha-D-glucosamine from N-acetyl-alpha-D-glucosamine 1-phosphate: step 1/1. Its pathway is bacterial outer membrane biogenesis; LPS lipid A biosynthesis. Its function is as follows. Catalyzes the last two sequential reactions in the de novo biosynthetic pathway for UDP-N-acetylglucosamine (UDP-GlcNAc). The C-terminal domain catalyzes the transfer of acetyl group from acetyl coenzyme A to glucosamine-1-phosphate (GlcN-1-P) to produce N-acetylglucosamine-1-phosphate (GlcNAc-1-P), which is converted into UDP-GlcNAc by the transfer of uridine 5-monophosphate (from uridine 5-triphosphate), a reaction catalyzed by the N-terminal domain. The polypeptide is Bifunctional protein GlmU (Cupriavidus pinatubonensis (strain JMP 134 / LMG 1197) (Cupriavidus necator (strain JMP 134))).